A 77-amino-acid polypeptide reads, in one-letter code: Acyl carrier protein (77 aa).

Residues 2–77 form the Carrier domain; sequence SDIEQRVKNV…LAIDYVKSHQ (76 aa). Serine 37 carries the post-translational modification O-(pantetheine 4'-phosphoryl)serine.

The protein belongs to the acyl carrier protein (ACP) family. Post-translationally, 4'-phosphopantetheine is transferred from CoA to a specific serine of apo-ACP by AcpS. This modification is essential for activity because fatty acids are bound in thioester linkage to the sulfhydryl of the prosthetic group.

It is found in the cytoplasm. The protein operates within lipid metabolism; fatty acid biosynthesis. Its function is as follows. Carrier of the growing fatty acid chain in fatty acid biosynthesis. In Leucothrix mucor, this protein is Acyl carrier protein.